The chain runs to 366 residues: Galactoside alpha-(1,2)-fucosyltransferase 1 (366 aa).

The Cytoplasmic segment spans residues 1–8 (MWPRSHRH). The helical; Signal-anchor for type II membrane protein transmembrane segment at 9-25 (LCLAFLLVCVLSAISFL) threads the bilayer. Residues 26-366 (IHFHQDSIRH…LSPLWPLAEP (341 aa)) lie on the Lumenal side of the membrane. N-linked (GlcNAc...) asparagine glycosylation is found at N66, N302, and N328.

It belongs to the glycosyltransferase 11 family.

The protein resides in the golgi apparatus. Its subcellular location is the golgi stack membrane. It catalyses the reaction a beta-D-galactosyl-(1-&gt;4)-N-acetyl-beta-D-glucosaminyl derivative + GDP-beta-L-fucose = an alpha-L-Fuc-(1-&gt;2)-beta-D-Gal-(1-&gt;4)-beta-D-GlcNAc derivative + GDP + H(+). The catalysed reaction is a ganglioside GA1 + GDP-beta-L-fucose = a ganglioside Fuc-GA1 + GDP + H(+). It carries out the reaction a beta-D-Gal-(1-&gt;3)-beta-D-GlcNAc-(1-&gt;3)-beta-D-Gal-(1-&gt;4)-beta-D-Glc-(1&lt;-&gt;1')-Cer(d18:1(4E)) + GDP-beta-L-fucose = alpha-L-fucosyl-(1-&gt;2)- beta-D-galactosyl-(1-&gt;3)-N-acetyl-beta-D-glucosaminyl-(1-&gt;3)-beta-D-galactosyl-(1-&gt;4)-beta-D-glucosyl-(1&lt;-&gt;1')-N-acylsphing-4-enine + GDP + H(+). The enzyme catalyses a neolactoside nLc4Cer(d18:1(4E)) + GDP-beta-L-fucose = a neolactoside IV(2)-alpha-Fuc-nLc4Cer(d18:1(4E)) + GDP + H(+). It catalyses the reaction a ganglioside GM1 + GDP-beta-L-fucose = a ganglioside Fuc-GM1 + GDP + H(+). The catalysed reaction is beta-D-galactosyl-(1-&gt;3)-N-acetyl-D-galactosamine + GDP-beta-L-fucose = alpha-L-fucosyl-(1-&gt;2)-beta-D-galactosyl-(1-&gt;3)-N-acetyl-D-galactosamine + GDP + H(+). The protein operates within protein modification; protein glycosylation. Its function is as follows. Catalyzes the transfer of L-fucose, from a guanosine diphosphate-beta-L-fucose, to the terminal galactose residue of glycoconjugates through an alpha(1,2) linkage leading to H antigen synthesis that is an intermediate substrate in the synthesis of ABO blood group antigens. H antigen is essential for maturation of the glomerular layer of the main olfactory bulb, in cell migration and early cell-cell contacts during tumor associated angiogenesis. Preferentially fucosylates soluble lactose and to a lesser extent fucosylates glycolipids gangliosides GA1 and GM1a. In Saimiri boliviensis boliviensis (Bolivian squirrel monkey), this protein is Galactoside alpha-(1,2)-fucosyltransferase 1.